A 729-amino-acid polypeptide reads, in one-letter code: Fatty acid oxidation complex subunit alpha (729 aa).

An enoyl-CoA hydratase/isomerase region spans residues 1-189; that stretch reads MLYQSETLQL…KVGLVDAVVA (189 aa). Aspartate 296 lines the substrate pocket. Positions 311–729 are 3-hydroxyacyl-CoA dehydrogenase; it reads SAPKQAAVLG…LLDVSISQPA (419 aa). Residues methionine 324, aspartate 343, 400 to 402, lysine 407, and serine 429 each bind NAD(+); that span reads VVE. Histidine 450 (for 3-hydroxyacyl-CoA dehydrogenase activity) is an active-site residue. NAD(+) is bound at residue asparagine 453. Asparagine 500 and tyrosine 660 together coordinate substrate.

In the N-terminal section; belongs to the enoyl-CoA hydratase/isomerase family. It in the C-terminal section; belongs to the 3-hydroxyacyl-CoA dehydrogenase family. Heterotetramer of two alpha chains (FadB) and two beta chains (FadA).

It carries out the reaction a (3S)-3-hydroxyacyl-CoA + NAD(+) = a 3-oxoacyl-CoA + NADH + H(+). The catalysed reaction is a (3S)-3-hydroxyacyl-CoA = a (2E)-enoyl-CoA + H2O. The enzyme catalyses a 4-saturated-(3S)-3-hydroxyacyl-CoA = a (3E)-enoyl-CoA + H2O. It catalyses the reaction (3S)-3-hydroxybutanoyl-CoA = (3R)-3-hydroxybutanoyl-CoA. It carries out the reaction a (3Z)-enoyl-CoA = a 4-saturated (2E)-enoyl-CoA. The catalysed reaction is a (3E)-enoyl-CoA = a 4-saturated (2E)-enoyl-CoA. It functions in the pathway lipid metabolism; fatty acid beta-oxidation. Functionally, involved in the aerobic and anaerobic degradation of long-chain fatty acids via beta-oxidation cycle. Catalyzes the formation of 3-oxoacyl-CoA from enoyl-CoA via L-3-hydroxyacyl-CoA. It can also use D-3-hydroxyacyl-CoA and cis-3-enoyl-CoA as substrate. The protein is Fatty acid oxidation complex subunit alpha of Yersinia enterocolitica serotype O:8 / biotype 1B (strain NCTC 13174 / 8081).